Here is a 149-residue protein sequence, read N- to C-terminus: Large ribosomal subunit protein bL9 (149 aa).

It belongs to the bacterial ribosomal protein bL9 family.

Binds to the 23S rRNA. This Proteus mirabilis (strain HI4320) protein is Large ribosomal subunit protein bL9.